The sequence spans 244 residues: uncharacterized protein (244 aa).

The segment at 1–127 (MSGPQGSDPR…YPGQYGPYGQ (127 aa)) is disordered. The span at 34–43 (WQQQPTQEAT) shows a compositional bias: polar residues. 2 stretches are compositionally biased toward low complexity: residues 45–75 (QAPAYTPQYQQPADPAYPQQYPQPTPGYAQP) and 88–127 (PGQYGQYQQPGQYGQPGQYGQPGQYAPPGQYPGQYGPYGQ). The helical transmembrane segment at 136 to 156 (VAVIGGVIAVMAVLFIGAVLI) threads the bilayer.

It is found in the membrane. This is an uncharacterized protein from Mycobacterium tuberculosis (strain CDC 1551 / Oshkosh).